We begin with the raw amino-acid sequence, 291 residues long: Beta-lactamase CTX-M-14 (291 aa).

Residues 1–28 form the signal peptide; it reads MVTKRVQRMMFAAAACIPLLLGSAPLYA. Ser73 acts as the Nucleophile; acyl-ester intermediate in catalysis. A beta-lactam is bound by residues Lys76, Ser133, Glu169, and Ser240.

It belongs to the class-A beta-lactamase family. Monomer.

It localises to the secreted. The catalysed reaction is a beta-lactam + H2O = a substituted beta-amino acid. With respect to regulation, inhibited by the beta-lactamase-blocking agents clavulanic acid, tazobactam and sulbactam. Extended-spectrum beta-lactamase (ESBL) which confers resistance to penicillins, as well as first, second, and third-generation cephalosporins. Has cefotaxime-hydrolyzing activity. The sequence is that of Beta-lactamase CTX-M-14 from Escherichia coli.